The chain runs to 352 residues: Ribosomal RNA large subunit methyltransferase M (352 aa).

Residues Ser-184, 217–220 (APGG), Asp-236, Asp-256, and Asp-272 contribute to the S-adenosyl-L-methionine site. Lys-301 (proton acceptor) is an active-site residue.

The protein belongs to the class I-like SAM-binding methyltransferase superfamily. RNA methyltransferase RlmE family. RlmM subfamily. In terms of assembly, monomer.

It is found in the cytoplasm. The enzyme catalyses cytidine(2498) in 23S rRNA + S-adenosyl-L-methionine = 2'-O-methylcytidine(2498) in 23S rRNA + S-adenosyl-L-homocysteine + H(+). Functionally, catalyzes the 2'-O-methylation at nucleotide C2498 in 23S rRNA. The sequence is that of Ribosomal RNA large subunit methyltransferase M from Pseudomonas aeruginosa (strain LESB58).